The following is a 55-amino-acid chain: Protein CADMIUM TOLERANCE 2 (55 aa).

The chain crosses the membrane as a helical span at residues 24–40; sequence GCLYACIFTALCCFCCY.

The protein belongs to the CYSTM1 family. Expressed only in roots.

Its subcellular location is the cell membrane. The protein resides in the secreted. It is found in the cell wall. Confers resistance to heavy metal ions (e.g. cadmium (CdCl(2)) and copper (CuCl(2))) by chelating them at the plasma membrane of root cells, thus stopping their entry and reducing their accumulation. This is Protein CADMIUM TOLERANCE 2 from Oryza sativa subsp. japonica (Rice).